Consider the following 468-residue polypeptide: Sorting and assembly machinery component 50 homolog A (468 aa).

The tract at residues 1 to 24 (MGTVHARSLDPLPMNGPDFGSPDD) is disordered. Residues 44–124 (VVVQRVHFEG…LDVTFEVTEL (81 aa)) enclose the POTRA domain.

The protein belongs to the SAM50/omp85 family. As to quaternary structure, associates with the mitochondrial contact site and cristae organizing system (MICOS) complex (also known as MINOS or MitOS complex).

It is found in the mitochondrion outer membrane. May play a role in the maintenance of the structure of mitochondrial cristae. This chain is Sorting and assembly machinery component 50 homolog A (samm50-a), found in Xenopus laevis (African clawed frog).